The primary structure comprises 563 residues: Minor fimbrium subunit Mfa1 (563 aa).

Positions 1–19 (MKLNKMFLVGALLSLGFAS) are cleaved as a signal peptide. Cys20 carries the N-palmitoyl cysteine lipid modification. A lipid anchor (S-diacylglycerol cysteine) is attached at Cys20. The propeptide occupies 20-49 (CSKEGNGPDPDNAAKSYMSMTLSMPMGSAR). The tract at residues 504 to 543 (LVPDPDPSNPENPNNPDPNPDEPGTPVPTDPENPLPDQDT) is disordered. Over residues 505–537 (VPDPDPSNPENPNNPDPNPDEPGTPVPTDPENP) the composition is skewed to pro residues.

It belongs to the bacteroidetes fimbrillin superfamily. As to quaternary structure, structural component of the fimbrial stalk. Minor fimbriae are composed of a structural subunit, most often Mfa1, and the accessory subunits Mfa3, Mfa4 and Mfa5. Mfa1 interacts with Mfa2; this anchors the fimbrium in the membrane. Fimbrium assembly occurs by linear, head-to-tail oligomerization of fimbrial subunits. This is mediated via insertion of a C-terminal beta-strand from one subunit into a groove in the N-terminal domain of the following subunit. Interacts with S.gordonii ssp5.

It is found in the fimbrium. It localises to the cell outer membrane. In terms of biological role, structural subunit of the minor fimbriae. These filamentous pili are attached to the cell surface; they mediate biofilm formation, adhesion onto host cells and onto other bacteria that are part of the oral microbiome. They play an important role in invasion of periodontal tissues and are recognized as major virulence factors. Mfa1 orthologs from different strains have highly divergent sequences, and this correlates with pathogenicity. The sequence is that of Minor fimbrium subunit Mfa1 from Porphyromonas gingivalis (strain ATCC 33277 / DSM 20709 / CIP 103683 / JCM 12257 / NCTC 11834 / 2561).